The chain runs to 181 residues: UPF0398 protein LMHCC_0668 (181 aa).

The protein belongs to the UPF0398 family.

The sequence is that of UPF0398 protein LMHCC_0668 from Listeria monocytogenes serotype 4a (strain HCC23).